A 1158-amino-acid polypeptide reads, in one-letter code: Phospholipid-transporting ATPase 1 (1158 aa).

The segment covering 1–15 has biased composition (basic and acidic residues); the sequence is MDPRKSIDKPPHHDP. Residues 1-30 are disordered; the sequence is MDPRKSIDKPPHHDPILGVSSRWSVSSKDN. The Cytoplasmic segment spans residues 1–100; it reads MDPRKSIDKP…TAKYSVFTFL (100 aa). A helical transmembrane segment spans residues 101–122; sequence PRNLFEQFHRVAYIYFLVIAVL. Over 123 to 127 the chain is Extracellular; it reads NQLPQ. The chain crosses the membrane as a helical span at residues 128 to 150; it reads LAVFGRGASIMPLAFVLLVSAIK. Residues 151–329 lie on the Cytoplasmic side of the membrane; the sequence is DAYEDFRRHR…SRLETRMNLE (179 aa). Residues 330–351 traverse the membrane as a helical segment; the sequence is IILLSLFLIVLCTIAAATAAVW. Residues 352–391 lie on the Extracellular side of the membrane; the sequence is LRTHRDDLDTILFYRRKDYSERPGGKNYKYYGWGWEIFFT. The chain crosses the membrane as a helical span at residues 392 to 409; sequence FFMAVIVYQIMIPISLYI. Over 410–914 the chain is Cytoplasmic; it reads SMELVRIGQA…HGHWNYQRMG (505 aa). Catalysis depends on Asp457, which acts as the 4-aspartylphosphate intermediate. The Mg(2+) site is built by Asp859 and Asp863. The helical transmembrane segment at 915–934 threads the bilayer; the sequence is YMILYNFYRNAVFVLILFWY. The Extracellular segment spans residues 935-948; that stretch reads VLFTCYTLTTAITE. Residues 949–968 traverse the membrane as a helical segment; the sequence is WSSVLYSVIYTAIPTIIIGI. Topologically, residues 969-998 are cytoplasmic; the sequence is LDKDLGRQTLLDHPQLYGVGQRAEGYSTTL. Residues 999–1020 form a helical membrane-spanning segment; sequence FWYTMIDTIWQSAAIFFIPMFA. The Extracellular segment spans residues 1021-1027; sequence YWGSTID. Residues 1028 to 1050 traverse the membrane as a helical segment; that stretch reads TSSLGDLWTIAAVVVVNLHLAMD. The Cytoplasmic segment spans residues 1051–1056; sequence VIRWNW. The helical transmembrane segment at 1057-1077 threads the bilayer; that stretch reads ITHAAIWGSIVAACICVIVID. At 1078-1090 the chain is on the extracellular side; that stretch reads VIPTLPGYWAIFQ. The helical transmembrane segment at 1091-1115 threads the bilayer; it reads VGKTWMFWFCLLAIVVTSLLPRFAI. At 1116–1158 the chain is on the cytoplasmic side; sequence KFLVEYYRPSDVRIAREAEKLGTFRESQPVGVEMNLIQDPPRR.

Belongs to the cation transport ATPase (P-type) (TC 3.A.3) family. Type IV subfamily. As to expression, expressed in roots, flowers, anthers, leaves, vascular tissues and stems.

The protein localises to the endoplasmic reticulum membrane. It localises to the cell membrane. It catalyses the reaction ATP + H2O + phospholipidSide 1 = ADP + phosphate + phospholipidSide 2.. In terms of biological role, involved in transport of phospholipids. Contributes to transmembrane flipping of lipids. Has activity with phosphatidylserine and with a much lower efficiency with phosphatidylethanolamine, but not with phosphatidylcholine. This is Phospholipid-transporting ATPase 1 from Arabidopsis thaliana (Mouse-ear cress).